Reading from the N-terminus, the 283-residue chain is Thymidylate synthase (283 aa).

Arginine 22 lines the dUMP pocket. Cysteine 160 acts as the Nucleophile in catalysis. DUMP-binding positions include 180-183, asparagine 191, and 221-223; these read RSCD and HIY. Residue aspartate 183 coordinates (6R)-5,10-methylene-5,6,7,8-tetrahydrofolate. Residue serine 282 coordinates (6R)-5,10-methylene-5,6,7,8-tetrahydrofolate.

The protein belongs to the thymidylate synthase family. Bacterial-type ThyA subfamily. In terms of assembly, homodimer.

The protein resides in the cytoplasm. It catalyses the reaction dUMP + (6R)-5,10-methylene-5,6,7,8-tetrahydrofolate = 7,8-dihydrofolate + dTMP. It participates in pyrimidine metabolism; dTTP biosynthesis. Its function is as follows. Catalyzes the reductive methylation of 2'-deoxyuridine-5'-monophosphate (dUMP) to 2'-deoxythymidine-5'-monophosphate (dTMP) while utilizing 5,10-methylenetetrahydrofolate (mTHF) as the methyl donor and reductant in the reaction, yielding dihydrofolate (DHF) as a by-product. This enzymatic reaction provides an intracellular de novo source of dTMP, an essential precursor for DNA biosynthesis. The protein is Thymidylate synthase of Photobacterium profundum (strain SS9).